Here is a 395-residue protein sequence, read N- to C-terminus: Endophilin-B2 (395 aa).

Methionine 1 carries the N-acetylmethionine modification. Residues 1 to 27 (MDFNMKKLASDAGIFFTRAVQFTEEKF) are membrane-binding amphipathic helix. At serine 10 the chain carries Phosphoserine. The 264-residue stretch at 24–287 (EEKFGQAEKT…LGRFPGTFVG (264 aa)) folds into the BAR domain. 2 coiled-coil regions span residues 116–132 (IKVA…ERDF) and 206–240 (ASAL…LLLE). Residues 335–395 (SGTRKARVLY…VPVTYLELLS (61 aa)) enclose the SH3 domain. A Phosphoserine modification is found at serine 395.

The protein belongs to the endophilin family. Homodimer, and heterodimer with SH3GLB1.

The protein resides in the cytoplasm. This Bos taurus (Bovine) protein is Endophilin-B2 (SH3GLB2).